The chain runs to 328 residues: Ketol-acid reductoisomerase (NADP(+)) (328 aa).

Residues 1-181 (MKIYYENDID…GLARAGVLET (181 aa)) enclose the KARI N-terminal Rossmann domain. NADP(+) contacts are provided by residues 24–27 (YGSQ), Arg-47, Ser-52, and 82–85 (DEIQ). The active site involves His-107. Residue Gly-133 participates in NADP(+) binding. Residues 182–327 (TFREETETDL…SKLRKLCGLE (146 aa)) form the KARI C-terminal knotted domain. 4 residues coordinate Mg(2+): Asp-190, Glu-194, Glu-226, and Glu-230. Residue Ser-251 coordinates substrate.

This sequence belongs to the ketol-acid reductoisomerase family. Mg(2+) serves as cofactor.

The enzyme catalyses (2R)-2,3-dihydroxy-3-methylbutanoate + NADP(+) = (2S)-2-acetolactate + NADPH + H(+). The catalysed reaction is (2R,3R)-2,3-dihydroxy-3-methylpentanoate + NADP(+) = (S)-2-ethyl-2-hydroxy-3-oxobutanoate + NADPH + H(+). It participates in amino-acid biosynthesis; L-isoleucine biosynthesis; L-isoleucine from 2-oxobutanoate: step 2/4. The protein operates within amino-acid biosynthesis; L-valine biosynthesis; L-valine from pyruvate: step 2/4. In terms of biological role, involved in the biosynthesis of branched-chain amino acids (BCAA). Catalyzes an alkyl-migration followed by a ketol-acid reduction of (S)-2-acetolactate (S2AL) to yield (R)-2,3-dihydroxy-isovalerate. In the isomerase reaction, S2AL is rearranged via a Mg-dependent methyl migration to produce 3-hydroxy-3-methyl-2-ketobutyrate (HMKB). In the reductase reaction, this 2-ketoacid undergoes a metal-dependent reduction by NADPH to yield (R)-2,3-dihydroxy-isovalerate. The polypeptide is Ketol-acid reductoisomerase (NADP(+)) (Methanothermobacter thermautotrophicus (strain ATCC 29096 / DSM 1053 / JCM 10044 / NBRC 100330 / Delta H) (Methanobacterium thermoautotrophicum)).